A 166-amino-acid polypeptide reads, in one-letter code: Large ribosomal subunit protein uL10 (166 aa).

The protein belongs to the universal ribosomal protein uL10 family. In terms of assembly, part of the ribosomal stalk of the 50S ribosomal subunit. The N-terminus interacts with L11 and the large rRNA to form the base of the stalk. The C-terminus forms an elongated spine to which L12 dimers bind in a sequential fashion forming a multimeric L10(L12)X complex.

Forms part of the ribosomal stalk, playing a central role in the interaction of the ribosome with GTP-bound translation factors. The chain is Large ribosomal subunit protein uL10 from Bacillus licheniformis (strain ATCC 14580 / DSM 13 / JCM 2505 / CCUG 7422 / NBRC 12200 / NCIMB 9375 / NCTC 10341 / NRRL NRS-1264 / Gibson 46).